The primary structure comprises 216 residues: Uracil-DNA glycosylase (216 aa).

Asp-59 (proton acceptor) is an active-site residue.

This sequence belongs to the uracil-DNA glycosylase (UDG) superfamily. UNG family.

The protein resides in the cytoplasm. The enzyme catalyses Hydrolyzes single-stranded DNA or mismatched double-stranded DNA and polynucleotides, releasing free uracil.. Excises uracil residues from the DNA which can arise as a result of misincorporation of dUMP residues by DNA polymerase or due to deamination of cytosine. This Staphylococcus epidermidis (strain ATCC 35984 / DSM 28319 / BCRC 17069 / CCUG 31568 / BM 3577 / RP62A) protein is Uracil-DNA glycosylase.